A 302-amino-acid chain; its full sequence is Putative F-box protein At1g32420 (302 aa).

A compositionally biased stretch (basic and acidic residues) spans 1–10 (MKRGNEENNH). A disordered region spans residues 1–27 (MKRGNEENNHKTSSSSSTQRLSRRKIS). The 48-residue stretch at 31-78 (KSGNVNIPLDLTVEILKKLPAKSLLRFQCVSKQWLSIISSRRDFIDSI) folds into the F-box domain.

The chain is Putative F-box protein At1g32420 from Arabidopsis thaliana (Mouse-ear cress).